We begin with the raw amino-acid sequence, 277 residues long: Large ribosomal subunit protein mL46 (277 aa).

Position 228 is an N6-acetyllysine (Lys228).

This sequence belongs to the mitochondrion-specific ribosomal protein mL46 family. In terms of assembly, component of the mitochondrial ribosome large subunit (39S) which comprises a 16S rRNA and about 50 distinct proteins.

Its subcellular location is the mitochondrion. The chain is Large ribosomal subunit protein mL46 (MRPL46) from Bos taurus (Bovine).